A 326-amino-acid polypeptide reads, in one-letter code: Small ribosomal subunit protein RACK1x (326 aa).

WD repeat units follow at residues 13-53, 61-100, 103-142, 147-188, 191-230, 232-270, and 290-326; these read AHTD…KSYG, GHSH…TTRR, GHTK…KYTI, GHKE…LRNS, GHSG…KLYS, EAGS…VVED, and NQKK…IGRY.

The protein belongs to the WD repeat G protein beta family. Ribosomal protein RACK1 subfamily. As to quaternary structure, homodimer and heterodimer with RACK1A or RACK1B. Interacts with GB1, MEKK1, MKK4, MKK5, MPK3 and MPK6, but not with GPA1 or MPK4. Widely expressed.

In terms of biological role, minor component of the RACK1 regulatory proteins that play a role in multiple signal transduction pathways. Involved in multiple hormone responses and developmental processes. MAPK cascade scaffolding protein involved in the protease IV and ArgC signaling pathway but not the flg22 pathway. This is Small ribosomal subunit protein RACK1x from Arabidopsis thaliana (Mouse-ear cress).